The sequence spans 298 residues: Tyrosine recombinase XerC (298 aa).

The 87-residue stretch at 2–88 (TDLHTDVERY…ALRSFFDWLV (87 aa)) folds into the Core-binding (CB) domain. Positions 109–288 (HLPKNIDVDD…DFQHLASVYD (180 aa)) constitute a Tyr recombinase domain. Catalysis depends on residues Arg148, Lys172, His240, Arg243, and His266. The active-site O-(3'-phospho-DNA)-tyrosine intermediate is the Tyr275.

The protein belongs to the 'phage' integrase family. XerC subfamily. Forms a cyclic heterotetrameric complex composed of two molecules of XerC and two molecules of XerD, in which XerC interacts with XerD via its C-terminal region, XerD interacts with XerC via its C-terminal region and so on.

Its subcellular location is the cytoplasm. Its activity is regulated as follows. FtsK may regulate the catalytic switch between XerC and XerD in the heterotetrameric complex during the two steps of the recombination process. Its function is as follows. Site-specific tyrosine recombinase, which acts by catalyzing the cutting and rejoining of the recombining DNA molecules. Binds cooperatively to specific DNA consensus sequences that are separated from XerD binding sites by a short central region, forming the heterotetrameric XerC-XerD complex that recombines DNA substrates. The complex is essential to convert dimers of the bacterial chromosome into monomers to permit their segregation at cell division. It also contributes to the segregational stability of plasmids. In the complex XerC specifically exchanges the top DNA strands. The chain is Tyrosine recombinase XerC from Escherichia coli O6:K15:H31 (strain 536 / UPEC).